Here is a 297-residue protein sequence, read N- to C-terminus: HTH-type transcriptional regulator ArgP (297 aa).

Residues 4–60 (PDYRTLQALDAVIRERGFERAAQKLCITQSAVSQRIKQLENMFGQPLLVRTVPPRPT) enclose the HTH lysR-type domain. Residues 21–40 (FERAAQKLCITQSAVSQRIK) constitute a DNA-binding region (H-T-H motif).

It belongs to the LysR transcriptional regulatory family. In terms of assembly, homodimer.

In terms of biological role, controls the transcription of genes involved in arginine and lysine metabolism. This Salmonella typhi protein is HTH-type transcriptional regulator ArgP.